Reading from the N-terminus, the 181-residue chain is MILKETTINNYATALFNIAVKEKLVDDYIIQVDALIKSLADKDEFNKLVTYSNKEQKKQAILIIENTFSSFGFDIYLINALKILVENQLFINTRMILKVLYKKLLAYKNIVLGEVYSTEKLTKTQLNAIKKKISNKVNKKVELVNKIDPTLIGGIKVSVEDKVFDGSIKAKLEALKKQMNT.

It belongs to the ATPase delta chain family. In terms of assembly, F-type ATPases have 2 components, F(1) - the catalytic core - and F(0) - the membrane proton channel. F(1) has five subunits: alpha(3), beta(3), gamma(1), delta(1), epsilon(1). F(0) has three main subunits: a(1), b(2) and c(10-14). The alpha and beta chains form an alternating ring which encloses part of the gamma chain. F(1) is attached to F(0) by a central stalk formed by the gamma and epsilon chains, while a peripheral stalk is formed by the delta and b chains.

The protein localises to the cell membrane. In terms of biological role, f(1)F(0) ATP synthase produces ATP from ADP in the presence of a proton or sodium gradient. F-type ATPases consist of two structural domains, F(1) containing the extramembraneous catalytic core and F(0) containing the membrane proton channel, linked together by a central stalk and a peripheral stalk. During catalysis, ATP synthesis in the catalytic domain of F(1) is coupled via a rotary mechanism of the central stalk subunits to proton translocation. This protein is part of the stalk that links CF(0) to CF(1). It either transmits conformational changes from CF(0) to CF(1) or is implicated in proton conduction. This Mycoplasma mycoides subsp. mycoides SC (strain CCUG 32753 / NCTC 10114 / PG1) protein is ATP synthase subunit delta.